Reading from the N-terminus, the 104-residue chain is Thioredoxin 1 (104 aa).

Residues 2-104 (VKIVTSQAEF…LKQLIEKYAA (103 aa)) form the Thioredoxin domain. Catalysis depends on nucleophile residues Cys-30 and Cys-33. Cys-30 and Cys-33 are oxidised to a cystine.

The protein belongs to the thioredoxin family. Post-translationally, the disulfide bond between Cys-30 and Cys-33 acts as a redox-active center and is reduced by thioredoxin reductase TRXR.

It localises to the cytoplasm. In terms of biological role, participates in various redox reactions through the reversible oxidation of its active center dithiol to a disulfide and catalyzes dithiol-disulfide exchange reactions. By modifying the redox status of targeted proteins, induces changes in their structure and activity. Reduces oxidized glutathione (GSSG), thereby acting as a backup for the glutathione redox system. Reduces nitroglutathione (GSNO), a compound involved in the transport of nitric oxide (NO). Also reduces oxidative stress by detoxifying hydrogen peroxide, tert-butyl hydroperoxide and cumene hydroperoxide. Activates ornithine aminotransferase OAT by reducing a disulfide bond in the substrate binding loop, thereby enhancing the affinity of OAT for its substrates. May reduce S-adenosyl-L-homocysteine hydrolase SAHH. This is Thioredoxin 1 from Plasmodium falciparum (isolate 3D7).